The sequence spans 161 residues: MPSMDIVSEVDEEELRNAVENSRREVAGRFDLRGKEIEIDLKDNVVTLKSEDDFICKQLVDILRIQLSKRNVDPSSMEVDEKAVHSGKTFSLKVNFKQGIDSLVAKKLVKAIKDSKLKVQAAIQGDSVRITGKKRDDLQAVMRLAKESELGQPFQFDNFRD.

It belongs to the YajQ family.

Functionally, nucleotide-binding protein. This Shewanella frigidimarina (strain NCIMB 400) protein is Nucleotide-binding protein Sfri_0732.